Consider the following 346-residue polypeptide: Immunoglobulin heavy constant alpha (346 aa).

3 consecutive Ig-like domains span residues 6-96 (PSIF…KSVD), 118-212 (PRLS…VSIT), and 221-323 (PQVH…KSID). An intrachain disulfide couples Cys26 to Cys83. An N-linked (GlcNAc...) (complex) asparagine glycan is attached at Asn134. 2 cysteine pairs are disulfide-bonded: Cys139-Cys196 and Cys243-Cys306. An N-linked (GlcNAc...) (complex) asparagine glycan is attached at Asn333.

Immunoglobulins are composed of two identical heavy chains and two identical light chains; disulfide-linked. Monomeric or polymeric. Part of the secretory IgA (sIgA) complex that consists of two, four or five IgA monomers, and two additional non-Ig polypeptides, namely the JCHAIN and the secretory component (the proteolytic product of PIGR). In terms of processing, N-glycosylated. N-glycans attached to Asn-134 varies from differentially fucosylated complex and hybrid to sialylated with N-glycoyl neuraminic acid types: GlcNAc2Man3GlcNAc2(Fuc); GlcNAc1Man4GlcNAc2(Fuc); GlcNAc1Man4GlcNAc2; Gal1GlcNAc2Man3GlcNAc2(Fuc); GlcNAc2Man3GlcNAc2; Gal1GlcNAc2Man3GlcNAc2; GlcNAc1Man3GlcNAc2; GlcNAc1Man2GlcNAc2 and NeuGc1Gal1GlcNAc2Man3GlcNAc2(Fuc). N-glycans attached to Asn-333 are mainly fucosylated complex types: GlcNAc2Man3GlcNAc2; GlcNAc1Man3GlcNAc2; GlcNAc1Man3GlcNAc2(Fuc); GlcNAc2Man3GlcNAc2(Fuc); Gal1GlcNAc2Man3GlcNAc2(Fuc); NeuGc1Gal1GlcNAc1Man3GlcNAc2(Fuc); NeuGc1Gal1GlcNAc2Man3GlcNAc2(Fuc) and NeuAc1Gal1GlcNAc2Man3GlcNAc2(Fuc).

It localises to the secreted. The protein resides in the cell membrane. Its function is as follows. Constant region of immunoglobulin heavy chains. Immunoglobulins, also known as antibodies, are membrane-bound or secreted glycoproteins produced by B lymphocytes. In the recognition phase of humoral immunity, the membrane-bound immunoglobulins serve as receptors which, upon binding of a specific antigen, trigger the clonal expansion and differentiation of B lymphocytes into immunoglobulins-secreting plasma cells. Secreted immunoglobulins mediate the effector phase of humoral immunity, which results in the elimination of bound antigens. The antigen binding site is formed by the variable domain of one heavy chain, together with that of its associated light chain. Thus, each immunoglobulin has two antigen binding sites with remarkable affinity for a particular antigen. The variable domains are assembled by a process called V-(D)-J rearrangement and can then be subjected to somatic hypermutations which, after exposure to antigen and selection, allow affinity maturation for a particular antigen. Ig alpha is the major immunoglobulin class in body secretions. The protein is Immunoglobulin heavy constant alpha (IGHA) of Equus asinus (Donkey).